Reading from the N-terminus, the 234-residue chain is Orotidine 5'-phosphate decarboxylase (234 aa).

Residues Asp-10, Lys-32, 59–68 (DLKLHDIPTT), Thr-122, Arg-184, Gln-193, Gly-213, and Arg-214 contribute to the substrate site. Lys-61 functions as the Proton donor in the catalytic mechanism.

The protein belongs to the OMP decarboxylase family. Type 1 subfamily. As to quaternary structure, homodimer.

It carries out the reaction orotidine 5'-phosphate + H(+) = UMP + CO2. Its pathway is pyrimidine metabolism; UMP biosynthesis via de novo pathway; UMP from orotate: step 2/2. Its function is as follows. Catalyzes the decarboxylation of orotidine 5'-monophosphate (OMP) to uridine 5'-monophosphate (UMP). This is Orotidine 5'-phosphate decarboxylase from Bacillus pumilus (strain SAFR-032).